Consider the following 529-residue polypeptide: GMP synthase [glutamine-hydrolyzing] (529 aa).

Residues 16 to 205 form the Glutamine amidotransferase type-1 domain; the sequence is PVLVVDFGAQ…LHDFAGLDAD (190 aa). The active-site Nucleophile is the Cys93. Active-site residues include His179 and Glu181. Residues 206-403 enclose the GMPS ATP-PPase domain; the sequence is WTAANIAGVL…LDLPEEIVAR (198 aa). 233–239 provides a ligand contact to ATP; that stretch reads SGGVDSA.

In terms of assembly, homodimer.

The enzyme catalyses XMP + L-glutamine + ATP + H2O = GMP + L-glutamate + AMP + diphosphate + 2 H(+). Its pathway is purine metabolism; GMP biosynthesis; GMP from XMP (L-Gln route): step 1/1. Catalyzes the synthesis of GMP from XMP. The polypeptide is GMP synthase [glutamine-hydrolyzing] (Mycobacterium leprae (strain Br4923)).